The sequence spans 190 residues: Vascular endothelial growth factor A (190 aa).

The signal sequence occupies residues 1 to 26 (MNFLLSWVHWSLALLLYLHHAKWSQA). 3 disulfides stabilise this stretch: cysteine 51-cysteine 93, cysteine 82-cysteine 127, and cysteine 86-cysteine 129. N-linked (GlcNAc...) asparagine glycosylation occurs at asparagine 100.

Belongs to the PDGF/VEGF growth factor family. As to quaternary structure, homodimer; disulfide-linked. Also found as heterodimer with PGF. Interacts with NRP1. Interacts with BSG. Interacts with CD82; this interaction inhibits VEGFA-mediated signaling pathway.

Its subcellular location is the secreted. In terms of biological role, growth factor active in angiogenesis, vasculogenesis and endothelial cell growth. Induces endothelial cell proliferation, promotes cell migration, inhibits apoptosis and induces permeabilization of blood vessels. Binds to the FLT1/VEGFR1 and KDR/VEGFR2 receptors, heparan sulfate and heparin. Binding to NRP1 receptor initiates a signaling pathway needed for motor neuron axon guidance and cell body migration, including for the caudal migration of facial motor neurons from rhombomere 4 to rhombomere 6 during embryonic development. Also binds the DEAR/FBXW7-AS1 receptor. The protein is Vascular endothelial growth factor A (VEGFA) of Sus scrofa (Pig).